A 66-amino-acid chain; its full sequence is Large ribosomal subunit protein bL33 (66 aa).

The protein belongs to the bacterial ribosomal protein bL33 family.

In Synechococcus sp. (strain CC9311), this protein is Large ribosomal subunit protein bL33.